The sequence spans 116 residues: Ribosome-binding factor A (116 aa).

The protein belongs to the RbfA family. As to quaternary structure, monomer. Binds 30S ribosomal subunits, but not 50S ribosomal subunits or 70S ribosomes.

It localises to the cytoplasm. Its function is as follows. One of several proteins that assist in the late maturation steps of the functional core of the 30S ribosomal subunit. Associates with free 30S ribosomal subunits (but not with 30S subunits that are part of 70S ribosomes or polysomes). Required for efficient processing of 16S rRNA. May interact with the 5'-terminal helix region of 16S rRNA. The polypeptide is Ribosome-binding factor A (Streptococcus pneumoniae (strain ATCC 700669 / Spain 23F-1)).